The chain runs to 214 residues: Reticulon-3-B (214 aa).

A disordered region spans residues 1-22 (MAETSGPQSSHISSSSAGDKGS). Residues 26 to 214 (VRDLLYWRDV…LPGALKKKSE (189 aa)) enclose the Reticulon domain. 2 consecutive transmembrane segments (helical) span residues 46-66 (MVLL…YLVL) and 150-170 (TYIG…LLAF).

Homodimer.

The protein resides in the endoplasmic reticulum membrane. Its subcellular location is the golgi apparatus membrane. Functionally, may be involved in membrane trafficking in the early secretory pathway. This chain is Reticulon-3-B (rtn3-b), found in Xenopus laevis (African clawed frog).